Reading from the N-terminus, the 308-residue chain is Putative mitochondrial transporter UCP3 (308 aa).

The Mitochondrial intermembrane segment spans residues 1-10; the sequence is MVGLKPPEVP. Residues 11-32 traverse the membrane as a helical segment; the sequence is PTTAVKLLGAGTAACFADLLTF. Solcar repeat units follow at residues 11 to 102, 111 to 202, and 211 to 296; these read PTTA…VKQL, SSIT…IKEK, and DNLP…LKRA. Residues 33–73 lie on the Mitochondrial matrix side of the membrane; it reads PLDTAKVRLQIQGENQAARSAQYRGVLGTILTMVRNEGPRS. A helical transmembrane segment spans residues 74-96; it reads PYNGLVAGLQRQMSFASIRIGLY. Residues 97 to 116 are Mitochondrial intermembrane-facing; the sequence is DSVKQLYTPKGSDHSSITTR. Residues 117 to 133 traverse the membrane as a helical segment; it reads ILAGCTTGAMAVTCAQP. Residues 134–179 are Mitochondrial matrix-facing; the sequence is TDVVKVRFQASIHAGPRSNRKYSGTMDAYRTIAREEGVRGLWKGIL. The helical transmembrane segment at 180-196 threads the bilayer; sequence PNITRNAIVNCAEMVTY. Over 197 to 213 the chain is Mitochondrial intermembrane; that stretch reads DVIKEKVLDYHLLTDNL. The chain crosses the membrane as a helical span at residues 214–233; the sequence is PCHFVSAFGAGFCATVVASP. Over 234–267 the chain is Mitochondrial matrix; the sequence is VDVVKTRYMNSPPGQYQNPLDCMLKMVTQEGPTA. Residues 268 to 290 form a helical membrane-spanning segment; the sequence is FYKGFTPSFLRLGSWNVVMFVSY. The segment at 275-297 is purine nucleotide binding; that stretch reads SFLRLGSWNVVMFVSYEQLKRAL. Residues 291-308 lie on the Mitochondrial intermembrane side of the membrane; sequence EQLKRALMKVQMLRESPF.

It belongs to the mitochondrial carrier (TC 2.A.29) family. As to quaternary structure, interacts with HAX1; the interaction is direct and calcium-dependent.

The protein resides in the mitochondrion inner membrane. Putative transmembrane transporter that plays a role in mitochondrial metabolism via an as yet unclear mechanism. Originally, this mitochondrial protein was thought to act as a proton transmembrane transporter from the mitochondrial intermembrane space into the matrix, causing proton leaks through the inner mitochondrial membrane, thereby uncoupling mitochondrial membrane potential generation from ATP synthesis. However, this function is controversial and uncoupling may not be the function, or at least not the main function, but rather a consequence of more conventional metabolite transporter activity. This Sus scrofa (Pig) protein is Putative mitochondrial transporter UCP3.